A 1179-amino-acid polypeptide reads, in one-letter code: ATP-dependent helicase/deoxyribonuclease subunit B (1179 aa).

Belongs to the helicase family. AddB/RexB type 2 subfamily. Heterodimer of AddA and RexB. It depends on Mg(2+) as a cofactor.

Its function is as follows. The heterodimer acts as both an ATP-dependent DNA helicase and an ATP-dependent, dual-direction single-stranded exonuclease. Recognizes the chi site generating a DNA molecule suitable for the initiation of homologous recombination. This subunit has 5' -&gt; 3' nuclease activity but not helicase activity. This is ATP-dependent helicase/deoxyribonuclease subunit B from Lactobacillus delbrueckii subsp. bulgaricus (strain ATCC 11842 / DSM 20081 / BCRC 10696 / JCM 1002 / NBRC 13953 / NCIMB 11778 / NCTC 12712 / WDCM 00102 / Lb 14).